The chain runs to 207 residues: Large ribosomal subunit protein uL4 (207 aa).

The disordered stretch occupies residues 44 to 78; that stretch reads LRQGTHKTKTRSEVRGGGRKPWRQKGTGRARQGSI. The span at 60–71 shows a compositional bias: basic residues; the sequence is GGRKPWRQKGTG.

The protein belongs to the universal ribosomal protein uL4 family. Part of the 50S ribosomal subunit.

In terms of biological role, one of the primary rRNA binding proteins, this protein initially binds near the 5'-end of the 23S rRNA. It is important during the early stages of 50S assembly. It makes multiple contacts with different domains of the 23S rRNA in the assembled 50S subunit and ribosome. Its function is as follows. Forms part of the polypeptide exit tunnel. This Halalkalibacterium halodurans (strain ATCC BAA-125 / DSM 18197 / FERM 7344 / JCM 9153 / C-125) (Bacillus halodurans) protein is Large ribosomal subunit protein uL4.